Reading from the N-terminus, the 320-residue chain is RNA polymerase sigma factor SigA2 (320 aa).

The segment at 89 to 159 (MIEANLRLVV…TRAIAQQSRT (71 aa)) is sigma-70 factor domain-2. The Interaction with polymerase core subunit RpoC motif lies at 113–116 (DLIQ). A sigma-70 factor domain-3 region spans residues 168–243 (EKLNKLKKTQ…EDEQSSPSDY (76 aa)). The tract at residues 256–310 (LMAELTPQQQAVIALRYGLDEGDSLSLAKVGERLNISRERVRKLERQAMDHLRRR) is sigma-70 factor domain-4. The H-T-H motif DNA-binding region spans 282-301 (LAKVGERLNISRERVRKLER).

The protein belongs to the sigma-70 factor family.

The protein resides in the cytoplasm. Sigma factors are initiation factors that promote the attachment of RNA polymerase to specific initiation sites and are then released. This sigma factor is a component of the biological clock pathway that affects the circadian expression of a subset of genes in this bacterium. The chain is RNA polymerase sigma factor SigA2 (sigA2) from Synechococcus elongatus (strain ATCC 33912 / PCC 7942 / FACHB-805) (Anacystis nidulans R2).